The sequence spans 20 residues: Alpha-conotoxin-like ts14a (20 aa).

2 cysteine pairs are disulfide-bonded: C3–C16 and C14–C20.

As to expression, expressed by the venom duct.

Its subcellular location is the secreted. Alpha-conotoxins act on postsynaptic membranes, they bind to the nicotinic acetylcholine receptors (nAChR) and thus inhibit them. This chain is Alpha-conotoxin-like ts14a, found in Conus tessulatus (Tessellate cone).